Here is a 141-residue protein sequence, read N- to C-terminus: Putative pre-16S rRNA nuclease (141 aa).

Belongs to the YqgF nuclease family.

It is found in the cytoplasm. Functionally, could be a nuclease involved in processing of the 5'-end of pre-16S rRNA. In Natranaerobius thermophilus (strain ATCC BAA-1301 / DSM 18059 / JW/NM-WN-LF), this protein is Putative pre-16S rRNA nuclease.